The sequence spans 337 residues: Glyceraldehyde-3-phosphate dehydrogenase 2 (337 aa).

NAD(+)-binding positions include 11-12, aspartate 35, arginine 79, and threonine 121; that span reads RI. Residues 153–155, threonine 184, arginine 199, 212–213, and arginine 235 each bind D-glyceraldehyde 3-phosphate; these read SCT and TG. Catalysis depends on cysteine 154, which acts as the Nucleophile. Asparagine 317 contributes to the NAD(+) binding site.

It belongs to the glyceraldehyde-3-phosphate dehydrogenase family. Homotetramer.

The protein resides in the cytoplasm. It catalyses the reaction D-glyceraldehyde 3-phosphate + phosphate + NADP(+) = (2R)-3-phospho-glyceroyl phosphate + NADPH + H(+). It carries out the reaction D-glyceraldehyde 3-phosphate + phosphate + NAD(+) = (2R)-3-phospho-glyceroyl phosphate + NADH + H(+). It participates in carbohydrate degradation; glycolysis; pyruvate from D-glyceraldehyde 3-phosphate: step 1/5. Involved in photosynthetic carbon assimilation. Catalyzes the NAD(P)-dependent oxidative phosphorylation of glyceraldehyde 3-phosphate (G3P) to 1,3-bisphosphoglycerate (BPG). The first reaction step involves the formation of a hemiacetal intermediate between G3P and a cysteine residue, and this hemiacetal intermediate is then oxidized to a thioester, with concomitant reduction of NAD to NADH. The reduced NADH is then exchanged with the second NAD, and the thioester is attacked by a nucleophilic inorganic phosphate to produce BPG. It can use both NADP and NAD. The polypeptide is Glyceraldehyde-3-phosphate dehydrogenase 2 (gap2) (Synechocystis sp. (strain ATCC 27184 / PCC 6803 / Kazusa)).